Reading from the N-terminus, the 216-residue chain is Somatotropin (216 aa).

Positions 1–26 are cleaved as a signal peptide; it reads MAAGPRTSMLLAFALLCLPWTQEVGA. Zn(2+) is bound at residue His45. The cysteines at positions 78 and 189 are disulfide-linked. Ser131 carries the post-translational modification Phosphoserine. Glu198 lines the Zn(2+) pocket. Cys206 and Cys214 are oxidised to a cystine.

This sequence belongs to the somatotropin/prolactin family.

It localises to the secreted. In terms of biological role, plays an important role in growth control. Its major role in stimulating body growth is to stimulate the liver and other tissues to secrete IGF1. It stimulates both the differentiation and proliferation of myoblasts. It also stimulates amino acid uptake and protein synthesis in muscle and other tissues. The chain is Somatotropin (GH1) from Balaenoptera physalus (Fin whale).